The sequence spans 255 residues: MPKAPKKITKPKKAEKKKNPLFQAKPRSFRVGGDIQPKRDLTRFVRWPRYITLQRQKRVLLQRLKVPPQIHQFTKTLDKNQSSNLFKLLASYAPEKPAEKKQRLVAQAEAKKDGKQVETKKPIVLKYGLNHITTLIENKQAKLVVIAHDVDPIELVIFLPQLCRKNDVPFAFVKGKAALGKLVNKKTATAVALTEVRNEDKAKLQQFSELFKTNYNANDELRKTWGGGILGQKSQHKVEALAKAVQEEQIKKAKL.

A compositionally biased stretch (basic residues) spans 1–16; that stretch reads MPKAPKKITKPKKAEK. Residues 1 to 28 form a disordered region; sequence MPKAPKKITKPKKAEKKKNPLFQAKPRS.

Belongs to the eukaryotic ribosomal protein eL8 family.

In Tetrahymena thermophila, this protein is Large ribosomal subunit protein eL8 (RPL7A).